The following is a 387-amino-acid chain: Galanin receptor type 2 (387 aa).

Residues 1–28 (MNVSGCPGAGNASQAGGGGGWHPEAVIV) lie on the Extracellular side of the membrane. N-linked (GlcNAc...) asparagine glycosylation is found at N2 and N11. The chain crosses the membrane as a helical span at residues 29 to 49 (PLLFALIFLVGTVGNTLVLAV). Over 50–60 (LLRGGQAVSTT) the chain is Cytoplasmic. Residues 61–81 (NLFILNLGVADLCFILCCVPF) traverse the membrane as a helical segment. Residues 82–99 (QATIYTLDGWVFGSLLCK) are Extracellular-facing. Cysteines 98 and 175 form a disulfide. Residues 100–121 (AVHFLIFLTMHASSFTLAAVSL) traverse the membrane as a helical segment. Over 122–141 (DRYLAIRYPLHSRELRTPRN) the chain is Cytoplasmic. A helical membrane pass occupies residues 142-162 (ALAAIGLIWGLSLLFSGPYLS). The Extracellular segment spans residues 163-187 (YYRQSQLANLTVCHPAWSAPRRRAM). The chain crosses the membrane as a helical span at residues 188-208 (DICTFVFSYLLPVLVLGLTYA). Over 209 to 237 (RTLRYLWRAVDPVAAGSGARRAKRKVTRM) the chain is Cytoplasmic. The helical transmembrane segment at 238-258 (ILIVAALFCLCWMPHHALILC) threads the bilayer. Residues 259–260 (VW) are Extracellular-facing. Residues 261 to 281 (FGQFPLTRATYALRILSHLVS) traverse the membrane as a helical segment. Residues 282 to 387 (YANSCVNPIV…GDSILTVDVA (106 aa)) are Cytoplasmic-facing.

Belongs to the G-protein coupled receptor 1 family. Expressed abundantly within the central nervous system in both hypothalamus and hippocampus. In peripheral tissues, the strongest expression was observed in heart, kidney, liver, and small intestine.

The protein resides in the cell membrane. Functionally, receptor for the hormone galanin and GALP. Receptor for the hormone spexin-1. The activity of this receptor is mediated by G proteins that activate the phospholipase C/protein kinase C pathway (via G(q)) and that inhibit adenylyl cyclase (via G(i)). The chain is Galanin receptor type 2 (GALR2) from Homo sapiens (Human).